Reading from the N-terminus, the 334-residue chain is Sulfhydrogenase 2 subunit beta (334 aa).

4Fe-4S ferredoxin-type domains follow at residues Lys220–Thr250 and Cys294–Glu328. Residues Cys229, Cys232, Cys235, Cys239, Cys306, Cys309, Cys312, and Cys316 each coordinate [4Fe-4S] cluster.

Dimer of heterotetramer of alpha, beta, gamma and delta subunits. The nickel-containing alpha and delta subunits constitute the hydrogenase activity. The beta and gamma subunits (flavin-containing dimer) constitute the sulfur reductase activity. Requires [4Fe-4S] cluster as cofactor.

The protein resides in the cytoplasm. It carries out the reaction n sulfur + H2 = (n-1) sulfur + hydrogen sulfide + H(+). In terms of biological role, part of a bifunctional enzyme complex that functions as a hydrogen-evolving hydrogenase with sulfur-reducing activity. May play a role in hydrogen cycling during fermentative growth. Activity exhibited with NAD in addition to NADPH. The beta and gamma subunits form the sulfur-reducing component that catalyzes the cytoplasmic production of hydrogen sulfide in the presence of elemental sulfur. This is Sulfhydrogenase 2 subunit beta from Pyrococcus furiosus (strain ATCC 43587 / DSM 3638 / JCM 8422 / Vc1).